The sequence spans 213 residues: Na(+)-translocating NADH-quinone reductase subunit D (213 aa).

Helical transmembrane passes span Leu22–Leu42, Thr43–Arg63, Ile77–Ile97, Leu101–Met121, Phe131–Ile151, and Leu183–Val203.

It belongs to the NqrDE/RnfAE family. Composed of six subunits; NqrA, NqrB, NqrC, NqrD, NqrE and NqrF.

It is found in the cell inner membrane. The enzyme catalyses a ubiquinone + n Na(+)(in) + NADH + H(+) = a ubiquinol + n Na(+)(out) + NAD(+). In terms of biological role, NQR complex catalyzes the reduction of ubiquinone-1 to ubiquinol by two successive reactions, coupled with the transport of Na(+) ions from the cytoplasm to the periplasm. NqrA to NqrE are probably involved in the second step, the conversion of ubisemiquinone to ubiquinol. This chain is Na(+)-translocating NADH-quinone reductase subunit D, found in Chlamydia trachomatis serovar A (strain ATCC VR-571B / DSM 19440 / HAR-13).